The chain runs to 974 residues: Probable proton ATPase 1A (974 aa).

The span at 1-23 (MSSKKYELDAAAFEDKPESHSDA) shows a compositional bias: basic and acidic residues. Residues 1–61 (MSSKKYELDA…ATDLLPPSKG (61 aa)) are disordered. Over 1-92 (MSSKKYELDA…KTPSWLIYVR (92 aa)) the chain is Cytoplasmic. A helical membrane pass occupies residues 93-112 (GLWGPMPAALWIAIIIEFAL). At 113–117 (ENWPD) the chain is on the extracellular side. Residues 118 to 137 (GAILFAIQIANATIGWYETI) form a helical membrane-spanning segment. Residues 138-264 (KAGDAVAALK…LGNIHVILRR (127 aa)) are Cytoplasmic-facing. The chain crosses the membrane as a helical span at residues 265-286 (VMFSLCAISFMLCMCCFIYLLA). At 287-294 (RFYETFRH) the chain is on the extracellular side. The chain crosses the membrane as a helical span at residues 295 to 321 (ALQFAVVVLVVSIPIALEIVVTTTLAV). Over 322-630 (GSKHLSKHKI…AVHGATDAAR (309 aa)) the chain is Cytoplasmic. D351 serves as the catalytic 4-aspartylphosphate intermediate. Mg(2+)-binding residues include D605 and D609. The chain crosses the membrane as a helical span at residues 631-651 (AAADMVLTEPGLSVVVEAMLV). The Extracellular portion of the chain corresponds to 652–661 (SREVFQRMLS). A helical transmembrane segment spans residues 662 to 684 (FLTYRISATLQLVCFFFIACFSL). Topologically, residues 685 to 697 (TPKAYGSVDPHFQ) are cytoplasmic. The chain crosses the membrane as a helical span at residues 698–712 (FFHLPVLMFMLITLL). The Extracellular portion of the chain corresponds to 713 to 737 (NDGCLMTIGYDHVIPSERPQKWNLP). D714 contacts Mg(2+). A helical transmembrane segment spans residues 738 to 761 (VVFVSASILAAVACGSSLMLLWIG). Topologically, residues 762 to 812 (LEGYSSQYYENSWFHRLGLAQLPQGKLVTMMYLKISISDFLTLFSSRTGGH) are cytoplasmic. Residues 813–840 (FFFYMPPSPILFCGAIISLLVSTMAASF) traverse the membrane as a helical segment. The Extracellular segment spans residues 841 to 868 (WHKSRPDNVLTEGLAWGQTNAEKLLPLW). Residues 869–887 (VWIYCIVWWFVQDVVKVLA) form a helical membrane-spanning segment. Over 888–974 (HICMDAVDLF…VNVYVSRDQK (87 aa)) the chain is Cytoplasmic. Positions 950-959 (GLREDTHSPI) are enriched in basic and acidic residues. The interval 950–974 (GLREDTHSPIEEASPVNVYVSRDQK) is disordered.

This sequence belongs to the cation transport ATPase (P-type) (TC 3.A.3) family. Type IIIA subfamily.

The protein resides in the membrane. The enzyme catalyses ATP + H2O + H(+)(in) = ADP + phosphate + 2 H(+)(out). This is Probable proton ATPase 1A (H1A) from Leishmania donovani.